The sequence spans 405 residues: L-rhamnonate dehydratase (405 aa).

Substrate contacts are provided by histidine 33 and arginine 59. 3 residues coordinate Mg(2+): aspartate 226, glutamate 252, and glutamate 280. The active-site Proton acceptor is histidine 329. Glutamate 349 is a substrate binding site.

This sequence belongs to the mandelate racemase/muconate lactonizing enzyme family. RhamD subfamily. In terms of assembly, homooctamer; tetramer of dimers. The cofactor is Mg(2+).

The catalysed reaction is L-rhamnonate = 2-dehydro-3-deoxy-L-rhamnonate + H2O. Functionally, catalyzes the dehydration of L-rhamnonate to 2-keto-3-deoxy-L-rhamnonate (KDR). The sequence is that of L-rhamnonate dehydratase from Escherichia coli O9:H4 (strain HS).